Reading from the N-terminus, the 194-residue chain is MRLCDRDIIKALDEGSIVIEPRPDNSVISGVSVDLRLGNSFRVFQGHPAPYLDLSSSKADLSKVIESVMSEEILVDDGKPFFIHPGELVLGVTKESVTLPDNLVGWLDGRSSLARLGLMVHVTAHRIDPGWSGGIVLEFLNGGKLPIALSPGMTIGAINFETMSGSADRPYNKRDNAKYKDQTSAVGSRISGEN.

Residues 110–115 (RSSLAR), D128, 136–138 (VLE), Y171, K178, and Q182 contribute to the dCTP site. E138 (proton donor/acceptor) is an active-site residue. The segment at 169-194 (RPYNKRDNAKYKDQTSAVGSRISGEN) is disordered. Basic and acidic residues predominate over residues 170–181 (PYNKRDNAKYKD). The span at 182–194 (QTSAVGSRISGEN) shows a compositional bias: polar residues.

This sequence belongs to the dCTP deaminase family. Homotrimer.

It carries out the reaction dCTP + H2O + H(+) = dUTP + NH4(+). Its pathway is pyrimidine metabolism; dUMP biosynthesis; dUMP from dCTP (dUTP route): step 1/2. Catalyzes the deamination of dCTP to dUTP. In Marinomonas sp. (strain MWYL1), this protein is dCTP deaminase.